The sequence spans 232 residues: Two-component response regulator ORR4 (232 aa).

A Response regulatory domain is found at 11–147 (HVLAVDDSLI…DMKKLKSHLL (137 aa)). Asp80 carries the 4-aspartylphosphate modification. Disordered stretches follow at residues 153–174 (LPMAAAAPDKPPHKPDEAAASA) and 202–232 (AAAMEQEVISSPDQRTKPRLSSTSSGLAVET). The segment covering 209–232 (VISSPDQRTKPRLSSTSSGLAVET) has biased composition (polar residues).

This sequence belongs to the ARR family. Type-A subfamily. Two-component system major event consists of a His-to-Asp phosphorelay between a sensor histidine kinase (HK) and a response regulator (RR). In plants, the His-to-Asp phosphorelay involves an additional intermediate named Histidine-containing phosphotransfer protein (HPt). This multistep phosphorelay consists of a His-Asp-His-Asp sequential transfer of a phosphate group between first a His and an Asp of the HK protein, followed by the transfer to a conserved His of the HPt protein and finally the transfer to an Asp in the receiver domain of the RR protein. In terms of tissue distribution, expressed in mature leaves and flowers, and at low levels in roots and shoots.

Functionally, functions as a response regulator involved in His-to-Asp phosphorelay signal transduction system. Phosphorylation of the Asp residue in the receiver domain activates the ability of the protein to promote the transcription of target genes. Type-A response regulators seem to act as negative regulators of the cytokinin signaling. This Oryza sativa subsp. indica (Rice) protein is Two-component response regulator ORR4.